The chain runs to 315 residues: Apolipoprotein F (315 aa).

Residues 1–24 (MHSLRLILMSIQLLCYLLLCPVDA) form the signal peptide. Positions 25–154 (TSHGEATSVS…EQPGPKRAKR (130 aa)) are excised as a propeptide.

It belongs to the apolipoprotein F family. Liver.

It localises to the secreted. In terms of biological role, minor apolipoprotein that associates with LDL. Inhibits cholesteryl ester transfer protein (CETP) activity and appears to be an important regulator of cholesterol transport. Also associates to a lesser degree with VLDL, Apo-AI and Apo-AII. The polypeptide is Apolipoprotein F (Apof) (Mus musculus (Mouse)).